Here is a 346-residue protein sequence, read N- to C-terminus: Protein RecA (346 aa).

66-73 (GPESSGKT) provides a ligand contact to ATP.

The protein belongs to the RecA family.

The protein resides in the cytoplasm. Can catalyze the hydrolysis of ATP in the presence of single-stranded DNA, the ATP-dependent uptake of single-stranded DNA by duplex DNA, and the ATP-dependent hybridization of homologous single-stranded DNAs. It interacts with LexA causing its activation and leading to its autocatalytic cleavage. The chain is Protein RecA from Aromatoleum aromaticum (strain DSM 19018 / LMG 30748 / EbN1) (Azoarcus sp. (strain EbN1)).